The sequence spans 83 residues: Normal mucosa of esophagus-specific gene 1 protein (83 aa).

It belongs to the complex I NDUFA4 subunit family. Expressed mainly in stomach, placenta, small intestine and colon, as well as in normal mucosa of esophagus. Down-regulated in esophageal squamous cell carcinoma.

Its subcellular location is the nucleus. The sequence is that of Normal mucosa of esophagus-specific gene 1 protein (NMES1) from Homo sapiens (Human).